The following is a 122-amino-acid chain: Selenoprotein H (122 aa).

Lys20 carries the N6-acetyllysine modification. Residues 41-44 (CTSU) constitute a cross-link (cysteinyl-selenocysteine (Cys-Sec); redox-active). A non-standard amino acid (selenocysteine) is located at residue Sec44.

The protein belongs to the SelWTH family.

Its function is as follows. May be involved in a redox-related process. The protein is Selenoprotein H of Macaca fascicularis (Crab-eating macaque).